A 238-amino-acid polypeptide reads, in one-letter code: Ubiquinone biosynthesis O-methyltransferase (238 aa).

Residues R38, G58, D79, and M124 each contribute to the S-adenosyl-L-methionine site.

The protein belongs to the methyltransferase superfamily. UbiG/COQ3 family.

The enzyme catalyses a 3-demethylubiquinol + S-adenosyl-L-methionine = a ubiquinol + S-adenosyl-L-homocysteine + H(+). It catalyses the reaction a 3-(all-trans-polyprenyl)benzene-1,2-diol + S-adenosyl-L-methionine = a 2-methoxy-6-(all-trans-polyprenyl)phenol + S-adenosyl-L-homocysteine + H(+). The protein operates within cofactor biosynthesis; ubiquinone biosynthesis. Its function is as follows. O-methyltransferase that catalyzes the 2 O-methylation steps in the ubiquinone biosynthetic pathway. The chain is Ubiquinone biosynthesis O-methyltransferase from Acinetobacter baylyi (strain ATCC 33305 / BD413 / ADP1).